Reading from the N-terminus, the 284-residue chain is MNSGNLFFGWADESSQNKGRYRAIGMVSHPAEFESKLEGDINNILDYVFDESGLKRRELKWNKIDIFRCRAYERIVDYFLEHTGLGNPPFRVDILRWDIEDSRHSIQGRDDNQNLQRMYYHLFSNVISKRWPSGDWCFFPDKTGSVDWGELASFLDLGGSKVDLNERFNIRSINEVDSKDNVLVQVADFFAGLSVFSKEKLGLYVDWKFEKRGQQRLVPVEKIDLSKKDRRRFKILSYFEEGCEKLKIGVVLDRSKGLWTPNPANSINFWHYEPQSDADKAPTR.

This is an uncharacterized protein from Methanothermobacter thermautotrophicus (Methanobacterium thermoformicicum).